Consider the following 279-residue polypeptide: uncharacterized protein (279 aa).

The disordered stretch occupies residues 60 to 92 (RKANKLNNKQDSTFFNSASGETNNTILPPGVKN). Residues 70-85 (DSTFFNSASGETNNTI) show a composition bias toward polar residues. 3 consecutive transmembrane segments (helical) span residues 156 to 176 (IVGY…AVMN), 202 to 222 (ISIF…ILFL), and 237 to 257 (FIWI…LLMI).

It is found in the cell membrane. This is an uncharacterized protein from Mycoplasma genitalium (strain ATCC 33530 / DSM 19775 / NCTC 10195 / G37) (Mycoplasmoides genitalium).